The chain runs to 115 residues: Nitrogen regulatory protein P-II 1 (115 aa).

The residue at position 54 (Tyr-54) is an O-UMP-tyrosine.

Belongs to the P(II) protein family.

Could be involved in the regulation of nitrogen fixation. The protein is Nitrogen regulatory protein P-II 1 of Methanothermobacter thermautotrophicus (strain ATCC 29096 / DSM 1053 / JCM 10044 / NBRC 100330 / Delta H) (Methanobacterium thermoautotrophicum).